Here is a 30-residue protein sequence, read N- to C-terminus: Trypsin inhibitor 1 (30 aa).

3 disulfide bridges follow: Cys-4–Cys-21, Cys-11–Cys-23, and Cys-17–Cys-29.

This sequence belongs to the protease inhibitor I7 (squash-type serine protease inhibitor) family.

The protein resides in the secreted. Its function is as follows. Inhibits trypsin. This Momordica charantia (Bitter gourd) protein is Trypsin inhibitor 1.